The primary structure comprises 799 residues: Leucine--tRNA ligase (799 aa).

The short motif at 39 to 50 (PYPSGAGLHMGH) is the 'HIGH' region element. The 'KMSKS' region signature appears at 575 to 579 (KMSKS). K578 is an ATP binding site.

It belongs to the class-I aminoacyl-tRNA synthetase family.

It is found in the cytoplasm. It catalyses the reaction tRNA(Leu) + L-leucine + ATP = L-leucyl-tRNA(Leu) + AMP + diphosphate. This chain is Leucine--tRNA ligase, found in Malacoplasma penetrans (strain HF-2) (Mycoplasma penetrans).